A 195-amino-acid chain; its full sequence is MKRFVIGIGGVTNGGKTTLAKSLQKHLPNCSVISQDDFFKPESEIDIDENGFLQYDVLEALNMEKMMSAVSCWMENPGSSAGPAALESAQGVPILIIEGFLLFNYKPLDTIWNRSYFLTVPYEECKRRRSTRVYEPPDPPGYFDGHVWPMYLKHRQEMSSITWDIVYLDGTRSEEDLFSQVYEDVKQELEKQNGL.

10 to 18 (GVTNGGKTT) contributes to the ATP binding site. Mg(2+) is bound by residues threonine 17 and aspartate 36. Aspartate 36 functions as the Proton acceptor in the catalytic mechanism. Residues 36–39 (DDFF) and 55–56 (YD) contribute to the substrate site. Arginine 128 is a binding site for ATP. Substrate is bound by residues arginine 129 and 134–135 (YE). Residues 132 to 134 (RVY) and 172 to 174 (RSE) contribute to the ATP site.

The protein belongs to the uridine kinase family. NRK subfamily. Monomer.

The catalysed reaction is beta-nicotinamide D-riboside + ATP = beta-nicotinamide D-ribonucleotide + ADP + H(+). The enzyme catalyses beta-D-ribosylnicotinate + ATP = nicotinate beta-D-ribonucleotide + ADP + H(+). Its pathway is cofactor biosynthesis; NAD(+) biosynthesis. In terms of biological role, catalyzes the phosphorylation of nicotinamide riboside (NR) and nicotinic acid riboside (NaR) to form nicotinamide mononucleotide (NMN) and nicotinic acid mononucleotide (NaMN). The chain is Nicotinamide riboside kinase 1 (Nmrk1) from Mus musculus (Mouse).